We begin with the raw amino-acid sequence, 503 residues long: Lycopene beta cyclase, chloroplastic/chromoplastic (503 aa).

The transit peptide at 1 to 85 directs the protein to the chloroplast and chromoplast; sequence MDTLLRTHNR…DLPLYDPSKA (85 aa). 90 to 117 lines the NAD(+) pocket; sequence LAVVGGGPLARSCSTSLGGGLSVVSIDP.

This sequence belongs to the lycopene cyclase family.

The protein resides in the plastid. It is found in the chloroplast. Its subcellular location is the chromoplast. It localises to the chromoplast membrane. The protein localises to the chloroplast membrane. It catalyses the reaction a carotenoid psi-end group = a carotenoid beta-end derivative. It participates in carotenoid biosynthesis; beta-carotene biosynthesis. The protein operates within carotenoid biosynthesis; beta-zeacarotene biosynthesis. Functionally, catalyzes the double cyclization reaction which converts lycopene to beta-carotene and neurosporene to beta-zeacarotene. This chain is Lycopene beta cyclase, chloroplastic/chromoplastic (LCY1), found in Narcissus pseudonarcissus (Daffodil).